A 222-amino-acid chain; its full sequence is Eukaryotic translation initiation factor 4E-1 (222 aa).

A compositionally biased stretch (basic and acidic residues) spans 1–22; it reads MVDEVEKPASLEESKTNTREVE. The interval 1–37 is disordered; sequence MVDEVEKPASLEESKTNTREVEEGAEEVIESDDTMSS. Residues 23–33 are compositionally biased toward acidic residues; the sequence is EGAEEVIESDD. 2 EIF4G-binding regions span residues 47–50 and 57–93; these read HPLE and FDNPSGKSKQAAWGSSIRPIYTFSTVEDFWSVYNNIH. Residues 65-70, lysine 97, and 115-116 each bind mRNA; these read KQAAWG and WE. Cysteine 120 and cysteine 158 are joined by a disulfide. An EIF4G-binding region spans residues 141 to 150; sequence YTLLAMIGEQ. MRNA is bound by residues 165–170 and 210–214; these read RVRQEK and KKLDR.

This sequence belongs to the eukaryotic initiation factor 4E family. As to quaternary structure, EIF4F is a multi-subunit complex, the composition of which varies with external and internal environmental conditions. It is composed of at least EIF4A, EIF4E and EIF4G. EIF4E is also known to interact with other partners. In higher plants two isoforms of EIF4F have been identified, named isoform EIF4F and isoform EIF(iso)4F. Isoform EIF4F has subunits p220 and p26, whereas isoform EIF(iso)4F has subunits p82 and p28. Post-translationally, according to the redox status, the Cys-120-Cys-158 disulfide bridge may have a role in regulating protein function by affecting its ability to bind capped mRNA. In terms of tissue distribution, expressed ubiquitously in seedlings, roots, leaves, sepals, petals, anthers and dehisced pollen, with highest levels in pollen, maturing anthers and roots. Strongly expressed in susceptible plants but not in resistant ones.

The protein resides in the nucleus. It localises to the cytoplasm. Its function is as follows. Component of the protein complex eIF4F, which is involved in the recognition of the mRNA cap, ATP-dependent unwinding of 5'-terminal secondary structure and recruitment of mRNA to the ribosome. Recognizes and binds the 7-methylguanosine-containing mRNA cap during an early step in the initiation of protein synthesis and facilitates ribosome binding by inducing the unwinding of the mRNAs secondary structures. Key component of recessive resistance to potyviruses. In terms of biological role, (Microbial infection) Susceptibility host factor required for viral infection (e.g. potato virus Y (PVY) and pepper mottle virus (PepMoV)) by recruiting viral RNAs to the host ribosomal complex via an interaction with viral genome-linked protein (VPg). This is Eukaryotic translation initiation factor 4E-1 from Nicotiana tabacum (Common tobacco).